The primary structure comprises 642 residues: Chaperone protein DnaK (642 aa).

Thr198 carries the phosphothreonine; by autocatalysis modification. A compositionally biased stretch (basic and acidic residues) spans 578–589; sequence DDKEAIESRMQK. Residues 578–642 form a disordered region; it reads DDKEAIESRM…FEEVKDGDKK (65 aa). The span at 603–619 shows a compositional bias: low complexity; sequence AEQAAQQGGDAGAQAED.

The protein belongs to the heat shock protein 70 family.

Its function is as follows. Acts as a chaperone. The sequence is that of Chaperone protein DnaK from Hahella chejuensis (strain KCTC 2396).